A 518-amino-acid polypeptide reads, in one-letter code: Lysine--tRNA ligase (518 aa).

The disordered stretch occupies residues 1–28 (MTEPTQPNAAQPDAARPNVAPEMDDNKI). Mg(2+)-binding residues include glutamate 428 and glutamate 435.

It belongs to the class-II aminoacyl-tRNA synthetase family. In terms of assembly, homodimer. Mg(2+) is required as a cofactor.

It is found in the cytoplasm. It catalyses the reaction tRNA(Lys) + L-lysine + ATP = L-lysyl-tRNA(Lys) + AMP + diphosphate. The polypeptide is Lysine--tRNA ligase (Paraburkholderia phytofirmans (strain DSM 17436 / LMG 22146 / PsJN) (Burkholderia phytofirmans)).